A 401-amino-acid chain; its full sequence is Imidazolonepropionase (401 aa).

Residues His66 and His68 each coordinate Fe(3+). 2 residues coordinate Zn(2+): His66 and His68. Arg75, Tyr138, and His171 together coordinate 4-imidazolone-5-propanoate. Tyr138 is a binding site for N-formimidoyl-L-glutamate. His236 contacts Fe(3+). Position 236 (His236) interacts with Zn(2+). A 4-imidazolone-5-propanoate-binding site is contributed by Gln239. Position 311 (Asp311) interacts with Fe(3+). Residue Asp311 coordinates Zn(2+). The N-formimidoyl-L-glutamate site is built by Asn313 and Gly315. 4-imidazolone-5-propanoate is bound at residue Thr316.

This sequence belongs to the metallo-dependent hydrolases superfamily. HutI family. Zn(2+) serves as cofactor. It depends on Fe(3+) as a cofactor.

It is found in the cytoplasm. It carries out the reaction 4-imidazolone-5-propanoate + H2O = N-formimidoyl-L-glutamate. The protein operates within amino-acid degradation; L-histidine degradation into L-glutamate; N-formimidoyl-L-glutamate from L-histidine: step 3/3. In terms of biological role, catalyzes the hydrolytic cleavage of the carbon-nitrogen bond in imidazolone-5-propanoate to yield N-formimidoyl-L-glutamate. It is the third step in the universal histidine degradation pathway. This Acinetobacter baumannii (strain ATCC 17978 / DSM 105126 / CIP 53.77 / LMG 1025 / NCDC KC755 / 5377) protein is Imidazolonepropionase.